Consider the following 308-residue polypeptide: Ribonuclease Z (308 aa).

Residues His-60, His-62, Asp-64, His-65, His-140, Asp-209, and His-269 each coordinate Zn(2+). The active-site Proton acceptor is Asp-64.

This sequence belongs to the RNase Z family. In terms of assembly, homodimer. Zn(2+) serves as cofactor.

It catalyses the reaction Endonucleolytic cleavage of RNA, removing extra 3' nucleotides from tRNA precursor, generating 3' termini of tRNAs. A 3'-hydroxy group is left at the tRNA terminus and a 5'-phosphoryl group is left at the trailer molecule.. Its function is as follows. Zinc phosphodiesterase, which displays some tRNA 3'-processing endonuclease activity. Probably involved in tRNA maturation, by removing a 3'-trailer from precursor tRNA. The protein is Ribonuclease Z of Methanococcus maripaludis (strain DSM 14266 / JCM 13030 / NBRC 101832 / S2 / LL).